The following is a 797-amino-acid chain: Sodium/hydrogen exchanger 4 (797 aa).

Topologically, residues 1 to 13 are cytoplasmic; that stretch reads MGPAMFMAFRLWN. The segment at residues 14-28 is an intramembrane region (name=A/M1); the sequence is WLLLLAVLTRSEATS. Over 29–69 the chain is Cytoplasmic; it reads YVNESSNPTAQQAPDARFAASSSDPDEGISVFELDYDYVQI. Positions 32 to 52 are disordered; sequence ESSNPTAQQAPDARFAASSSD. Residues 70–90 constitute an intramembrane region (name=B/M2); it reads PYEVTLWILLASLAKIGFHLY. Residues 91–94 lie on the Cytoplasmic side of the membrane; sequence HRLP. A helical membrane pass occupies residues 95–114; the sequence is HLMPESCLLIIVGALVGGII. Topologically, residues 115-127 are extracellular; that stretch reads FGTHHKSPPVMDS. The chain crosses the membrane as a helical span at residues 128 to 148; it reads SIYFLYLLPPIVLESGYFMPT. Over 149–154 the chain is Cytoplasmic; that stretch reads RPFFEN. The chain crosses the membrane as a helical span at residues 155–175; the sequence is IGSILWWAGLGALINAFGIGL. Residues 176–194 lie on the Extracellular side of the membrane; that stretch reads SLYFICQIKAFGLGDINLL. Residues 195–215 traverse the membrane as a helical segment; it reads HNLLFGSLISAVDPVAVLAVF. Over 216–226 the chain is Cytoplasmic; it reads EEARVNEQLYM. Residues 227–247 traverse the membrane as a helical segment; sequence MIFGEALLNDGISVVLYNILI. Residues 248–270 lie on the Extracellular side of the membrane; sequence AFTKMHKFEDIEAVDILAGCARF. A helical membrane pass occupies residues 271–291; sequence VIVGCGGVFFGIIFGFISAFI. Over 292 to 304 the chain is Cytoplasmic; it reads TRFTQNISAIEPL. The helical transmembrane segment at 305 to 325 threads the bilayer; sequence IVFMFSYLSYLAAETLYLSGI. Residues 326–352 lie on the Extracellular side of the membrane; it reads LAITACAVTMKKYVEENVSQTSYTTIK. Asn-342 carries an N-linked (GlcNAc...) asparagine glycan. The helical transmembrane segment at 353-373 threads the bilayer; that stretch reads YFMKMLSSVSETLIFIFMGVS. Residues 374-384 are Cytoplasmic-facing; sequence TIGKNHEWNWA. A helical membrane pass occupies residues 385 to 405; sequence FICFTLLFCQIWRAISVFTLF. Over 406-420 the chain is Extracellular; that stretch reads YVSNQFRTFPFSIKD. Positions 421–441 form an intramembrane region, name=L; it reads QFIIFYSGVRGAGSFSLAFLL. Residues 442 to 450 lie on the Extracellular side of the membrane; sequence PLSLFPRKK. The helical transmembrane segment at 451–471 threads the bilayer; sequence LFVTATLVVTYFTVFFQGITI. Over 472–797 the chain is Cytoplasmic; the sequence is GPLVRYLDVR…KSHSPLLHRK (326 aa). Acidic residues predominate over residues 759-769; the sequence is YDSGEQTEEET. The tract at residues 759-797 is disordered; sequence YDSGEQTEEETSAILSRWTAEHRHSTEHHKSHSPLLHRK. A compositionally biased stretch (basic residues) spans 783–797; sequence STEHHKSHSPLLHRK.

The protein belongs to the monovalent cation:proton antiporter 1 (CPA1) transporter (TC 2.A.36) family. In terms of assembly, homodimer; each protomer has one site for sodium and one site for proton binding. Interacts with CHP1 and CHP2. Post-translationally, may be phosphorylated. In terms of tissue distribution, expressed in kidney. Expressed in uterus and endometrial epithelial cells. Expressed in the inner segments of inner medullary collecting ducts (IMCD) in kidney. Expressed in AGTR1-positive neurons in organum vasculosum of the lamina terminalis (at protein level).

It is found in the basolateral cell membrane. It localises to the apical cell membrane. The protein resides in the zymogen granule membrane. The catalysed reaction is Na(+)(in) + H(+)(out) = Na(+)(out) + H(+)(in). It catalyses the reaction Na(+)(out) + NH4(+)(in) = Na(+)(in) + NH4(+)(out). Its activity is regulated as follows. Up-regulated in response to high extracellular sodium concentration. Its function is as follows. Electroneutral antiporter that exchanges sodium for protons or ammonium ions at the basolateral membrane of epithelia to regulate cell volume and intracellular pH upon hypertonic conditions. As part of transcellular ammonia transport in renal tubules, mediates basolateral ammonium extrusion in the medullary thick ascending limb, regulating the corticopapillary ammonium gradient and overall renal acid excretion. Mediates sodium:proton exchange in gastric parietal cells secondary to cAMP-dependent acid secretion and hyperosmolarity. Possibly coupled to chloride:bicarbonate antiporter, enables loading of parietal cells with sodium and chloride ions to maintain cell volume and normal gastric acid secretion. Functions as a sodium sensor in neurons of organum vasculosum of the lamina terminalis where it regulates water intake in response to increased sodium concentration in body fluids. This chain is Sodium/hydrogen exchanger 4 (Slc9a4), found in Mus musculus (Mouse).